The chain runs to 80 residues: Polcalcin Cyn d 7 (80 aa).

2 consecutive EF-hand domains span residues 2–37 and 40–72; these read ADTG…LGST and DEVQ…NPGL. Residues aspartate 15, asparagine 17, aspartate 19, lysine 21, glutamate 26, aspartate 50, aspartate 52, aspartate 54, and glutamate 61 each coordinate Ca(2+).

The chain is Polcalcin Cyn d 7 from Cynodon dactylon (Bermuda grass).